The following is a 906-amino-acid chain: Protein translocase subunit SecA (906 aa).

Residues Q86, 104-108 (GEGKT), and D499 each bind ATP. Residues 862-887 (KPVVSRIDPKDRNPDDPTSWGRVSRN) are disordered. Residues C890, C892, C901, and H902 each coordinate Zn(2+).

It belongs to the SecA family. As to quaternary structure, monomer and homodimer. Part of the essential Sec protein translocation apparatus which comprises SecA, SecYEG and auxiliary proteins SecDF-YajC and YidC. Zn(2+) serves as cofactor.

It localises to the cell inner membrane. The protein resides in the cytoplasm. It catalyses the reaction ATP + H2O + cellular proteinSide 1 = ADP + phosphate + cellular proteinSide 2.. Its function is as follows. Part of the Sec protein translocase complex. Interacts with the SecYEG preprotein conducting channel. Has a central role in coupling the hydrolysis of ATP to the transfer of proteins into and across the cell membrane, serving both as a receptor for the preprotein-SecB complex and as an ATP-driven molecular motor driving the stepwise translocation of polypeptide chains across the membrane. The protein is Protein translocase subunit SecA of Rickettsia peacockii (strain Rustic).